We begin with the raw amino-acid sequence, 254 residues long: PF03932 family protein CutC (254 aa).

This sequence belongs to the CutC family.

It is found in the cytoplasm. The protein is PF03932 family protein CutC of Yersinia pseudotuberculosis serotype O:1b (strain IP 31758).